The following is a 640-amino-acid chain: Threonine--tRNA ligase (640 aa).

In terms of domain architecture, TGS spans 1–59 (MKIKVKLPDGKEKEYDRGITPAEIAKELGIKKAIGAVVNGELWDLKRPIENDCELRLVT). Residues 240 to 531 (DHRKLGPQLE…LIEHFAGAFP (292 aa)) form a catalytic region. Residues Cys-332, His-383, and His-508 each coordinate Zn(2+).

The protein belongs to the class-II aminoacyl-tRNA synthetase family. In terms of assembly, homodimer. It depends on Zn(2+) as a cofactor.

It localises to the cytoplasm. The catalysed reaction is tRNA(Thr) + L-threonine + ATP = L-threonyl-tRNA(Thr) + AMP + diphosphate + H(+). Its function is as follows. Catalyzes the attachment of threonine to tRNA(Thr) in a two-step reaction: L-threonine is first activated by ATP to form Thr-AMP and then transferred to the acceptor end of tRNA(Thr). Also edits incorrectly charged L-seryl-tRNA(Thr). This Thermotoga maritima (strain ATCC 43589 / DSM 3109 / JCM 10099 / NBRC 100826 / MSB8) protein is Threonine--tRNA ligase.